Consider the following 244-residue polypeptide: Salivary gland SP38-40.A protein (244 aa).

Positions 1 to 21 (MRIKFLVVLAVICLFAHYASA) are cleaved as a signal peptide. Disordered stretches follow at residues 23-91 (GMGG…EKKQ), 137-169 (PPPG…LRKE), and 206-244 (VQGK…DAKK). Basic and acidic residues-rich tracts occupy residues 26 to 86 (GDKK…EVKK) and 157 to 169 (PPKE…LRKE). 2 consecutive repeat copies span residues 29–34 (KPKDAP) and 35–40 (KPKDAP). The tract at residues 29–47 (KPKDAPKPKDAPKPKEVKP) is 3 X 6 AA approximate tandem repeats of K-P-K-D-A-P. Residues 41 to 47 (KPKEVKP) form a 1-3; approximate repeat. 2 tandem repeats follow at residues 156–159 (KPPK) and 161–164 (KPPK). The segment at 156 to 168 (KPPKEKPPKKLRK) is 3 X 4 AA approximate tandem repeats of K-P-P-K. One copy of the 2-3; approximate repeat lies at 165–168 (KLRK). Over residues 209 to 224 (KQKKGAKKAKGGKKAA) the composition is skewed to basic residues. Repeat copies occupy residues 225–228 (PKPG), 229–232 (PKPG), and 233–236 (PKQA). The tract at residues 225 to 240 (PKPGPKPGPKQADKPK) is 4 X 4 AA approximate tandem repeats of P-K-[PQ]-[GA]. Residues 235-244 (QADKPKDAKK) are compositionally biased toward basic and acidic residues. Residues 237-240 (DKPK) form a 3-4; approximate repeat.

As to expression, salivary gland.

It localises to the secreted. Its function is as follows. Used by the larvae to construct a supramolecular structure, the larval tube. The protein is Salivary gland SP38-40.A protein (SP38-40.A) of Chironomus tentans (Midge).